The sequence spans 611 residues: BTB/POZ domain-containing protein 9 (611 aa).

One can recognise a BTB domain in the interval 36 to 104 (GDVTFVVEKK…IYTGRATLTD (69 aa)). The 99-residue stretch at 142-240 (VCMTFDVASL…SLTELLNVVR (99 aa)) folds into the BACK domain. Positions 560 to 611 (QSAQKDSSDEPGTGGASAAGQQLDPHALQAPSGSSLPSSPGSNSRSPNRQHQ) are disordered. A compositionally biased stretch (low complexity) spans 586–611 (ALQAPSGSSLPSSPGSNSRSPNRQHQ).

This Bos taurus (Bovine) protein is BTB/POZ domain-containing protein 9 (BTBD9).